A 243-amino-acid chain; its full sequence is Ribosomal RNA small subunit methyltransferase J (243 aa).

S-adenosyl-L-methionine-binding positions include 112–113 and Asp164; that span reads ER.

The protein belongs to the methyltransferase superfamily. RsmJ family.

It localises to the cytoplasm. It catalyses the reaction guanosine(1516) in 16S rRNA + S-adenosyl-L-methionine = N(2)-methylguanosine(1516) in 16S rRNA + S-adenosyl-L-homocysteine + H(+). Its function is as follows. Specifically methylates the guanosine in position 1516 of 16S rRNA. The chain is Ribosomal RNA small subunit methyltransferase J from Legionella pneumophila (strain Paris).